Here is a 312-residue protein sequence, read N- to C-terminus: Cytochrome c biogenesis protein CcsA (312 aa).

8 helical membrane-spanning segments follow: residues 12–32, 47–67, 72–92, 98–118, 144–164, 220–240, 254–271, and 281–301; these read NLVF…LSFF, IVAN…AGYF, LYES…YVEF, LVGA…NLTL, MMLS…FLVI, IIGL…VWAN, TWAL…HSRI, and AILG…VNFL.

It belongs to the CcmF/CycK/Ccl1/NrfE/CcsA family. May interact with Ccs1.

It localises to the plastid. Its subcellular location is the chloroplast thylakoid membrane. Its function is as follows. Required during biogenesis of c-type cytochromes (cytochrome c6 and cytochrome f) at the step of heme attachment. This chain is Cytochrome c biogenesis protein CcsA, found in Trieres chinensis (Marine centric diatom).